Here is a 552-residue protein sequence, read N- to C-terminus: Membrane protein insertase YidC (552 aa).

Residues 3-23 (TKRLILFVIFSFSILMLWDSW) form a helical membrane-spanning segment. The segment at 29 to 65 (PPAASQTQTTAQSVEDGSVPQAAKSSASAANQASVPA) is disordered. Transmembrane regions (helical) follow at residues 359-379 (WGVAIILLTILIKLVFYPLSA), 429-449 (LPILVQIPVFIALYWVLLGSV), 463-483 (LSAVDPYYVLPILMGITMIIQ), and 503-523 (PIVFSVFFFFFPAGLVLYWLV).

This sequence belongs to the OXA1/ALB3/YidC family. Type 1 subfamily. Interacts with the Sec translocase complex via SecD. Specifically interacts with transmembrane segments of nascent integral membrane proteins during membrane integration.

Its subcellular location is the cell inner membrane. Functionally, required for the insertion and/or proper folding and/or complex formation of integral membrane proteins into the membrane. Involved in integration of membrane proteins that insert both dependently and independently of the Sec translocase complex, as well as at least some lipoproteins. Aids folding of multispanning membrane proteins. This chain is Membrane protein insertase YidC, found in Methylobacillus flagellatus (strain ATCC 51484 / DSM 6875 / VKM B-1610 / KT).